Consider the following 577-residue polypeptide: Hemagglutinin-neuraminidase (577 aa).

At 1 to 26 (MDRAVSQVALENDEREAKNTWRLIFR) the chain is on the intravirion side. Residues 27–47 (IAILFLTVVTLAISVASLLYS) form a helical membrane-spanning segment. The Virion surface portion of the chain corresponds to 48–577 (MGASTPSDLV…DDGVREARSG (530 aa)). An important for interaction with fusion/F protein region spans residues 124–152 (GAPIHDPDYIGGIGKELIVDDASDVTSFY). N-linked (GlcNAc...) asparagine; by host glycans are attached at residues N341, N433, N481, and N538.

This sequence belongs to the paramyxoviruses hemagglutinin-neuraminidase family. In terms of assembly, homotetramer; composed of disulfide-linked homodimers. Interacts with F protein trimer. Interacts with host CG-1B; this interaction inhibits viral adsorption and replication rather than internalization.

The protein resides in the virion membrane. It is found in the host cell membrane. The enzyme catalyses Hydrolysis of alpha-(2-&gt;3)-, alpha-(2-&gt;6)-, alpha-(2-&gt;8)- glycosidic linkages of terminal sialic acid residues in oligosaccharides, glycoproteins, glycolipids, colominic acid and synthetic substrates.. In terms of biological role, mediates the viral entry into the host cell together with fusion/F protein. Attaches the virus to sialic acid-containing cell receptors and thereby initiates infection. Binding of HN protein to the receptor induces a conformational change that allows the F protein to trigger virion/cell membranes fusion. Neuraminidase activity ensures the efficient spread of the virus by dissociating the mature virions from the neuraminic acid containing glycoproteins. This Gallus gallus (Chicken) protein is Hemagglutinin-neuraminidase (HN).